Reading from the N-terminus, the 284-residue chain is Acetyl-coenzyme A carboxylase carboxyl transferase subunit beta (284 aa).

Positions 31-284 (FWTYCKGCDS…LYQILAMHKK (254 aa)) constitute a CoA carboxyltransferase N-terminal domain. Zn(2+) contacts are provided by cysteine 35, cysteine 38, cysteine 54, and cysteine 57. Residues 35 to 57 (CKGCDSHVFRKDIEENSFVCPKC) form a C4-type zinc finger.

This sequence belongs to the AccD/PCCB family. Acetyl-CoA carboxylase is a heterohexamer composed of biotin carboxyl carrier protein (AccB), biotin carboxylase (AccC) and two subunits each of ACCase subunit alpha (AccA) and ACCase subunit beta (AccD). Requires Zn(2+) as cofactor.

It localises to the cytoplasm. The catalysed reaction is N(6)-carboxybiotinyl-L-lysyl-[protein] + acetyl-CoA = N(6)-biotinyl-L-lysyl-[protein] + malonyl-CoA. It functions in the pathway lipid metabolism; malonyl-CoA biosynthesis; malonyl-CoA from acetyl-CoA: step 1/1. Component of the acetyl coenzyme A carboxylase (ACC) complex. Biotin carboxylase (BC) catalyzes the carboxylation of biotin on its carrier protein (BCCP) and then the CO(2) group is transferred by the transcarboxylase to acetyl-CoA to form malonyl-CoA. This is Acetyl-coenzyme A carboxylase carboxyl transferase subunit beta from Clostridioides difficile (strain 630) (Peptoclostridium difficile).